Here is a 355-residue protein sequence, read N- to C-terminus: Uroporphyrinogen decarboxylase (355 aa).

Residues 36-40 (RQAGR), aspartate 85, tyrosine 160, serine 215, and histidine 334 each bind substrate.

This sequence belongs to the uroporphyrinogen decarboxylase family. In terms of assembly, homodimer.

The protein resides in the cytoplasm. It carries out the reaction uroporphyrinogen III + 4 H(+) = coproporphyrinogen III + 4 CO2. It participates in porphyrin-containing compound metabolism; protoporphyrin-IX biosynthesis; coproporphyrinogen-III from 5-aminolevulinate: step 4/4. Functionally, catalyzes the decarboxylation of four acetate groups of uroporphyrinogen-III to yield coproporphyrinogen-III. The polypeptide is Uroporphyrinogen decarboxylase (Rhodococcus erythropolis (strain PR4 / NBRC 100887)).